The chain runs to 473 residues: Glutamyl-tRNA reductase (473 aa).

Substrate-binding positions include 49-52, serine 109, 114-116, and glutamine 120; these read TCNR and ESQ. Residue cysteine 50 is the Nucleophile of the active site. The disordered stretch occupies residues 196–215; sequence LDGGGVAAEGPRHAVTPEPP. 226–231 contacts NADP(+); that stretch reads GAGAVG.

This sequence belongs to the glutamyl-tRNA reductase family. Homodimer.

It carries out the reaction (S)-4-amino-5-oxopentanoate + tRNA(Glu) + NADP(+) = L-glutamyl-tRNA(Glu) + NADPH + H(+). It participates in porphyrin-containing compound metabolism; protoporphyrin-IX biosynthesis; 5-aminolevulinate from L-glutamyl-tRNA(Glu): step 1/2. In terms of biological role, catalyzes the NADPH-dependent reduction of glutamyl-tRNA(Glu) to glutamate 1-semialdehyde (GSA). The sequence is that of Glutamyl-tRNA reductase from Frankia casuarinae (strain DSM 45818 / CECT 9043 / HFP020203 / CcI3).